We begin with the raw amino-acid sequence, 424 residues long: MARPALLGELLVLLLWTATVGQVAAATEVQPPVTNLSVSVENLCTIIWTWSPPEGASPNCTLRYFSHFDDQQDKKIAPETHRKEELPLDEKICLQVGSQCSANESEKPSPLVKKCISPPEGDPESAVTELKCIWHNLSYMKCSWLPGRNTSPDTHYTLYYWYSSLEKSRQCENIYREGQHIACSFKLTKVEPSFEHQNVQIMVKDNAGKIRPSCKIVSLTSYVKPDPPHIKHLLLKNGALLVQWKNPQNFRSRCLTYEVEVNNTQTDRHNILEVEEDKCQNSESDRNMEGTSCFQLPGVLADAVYTVRVRVKTNKLCFDDNKLWSDWSEAQSIGKEQNSTFYTTMLLTIPVFVAVAVIILLFYLKRLKIIIFPPIPDPGKIFKEMFGDQNDDTLHWKKYDIYEKQSKEETDSVVLIENLKKAAP.

Residues 1 to 25 (MARPALLGELLVLLLWTATVGQVAA) form the signal peptide. Residues 26-340 (ATEVQPPVTN…QSIGKEQNST (315 aa)) lie on the Extracellular side of the membrane. Residues 32–121 (PVTNLSVSVE…VKKCISPPEG (90 aa)) enclose the Fibronectin type-III 1 domain. N-linked (GlcNAc...) asparagine glycans are attached at residues N35, N59, N103, and N136. An intrachain disulfide couples C44 to C93. Cystine bridges form between C132/C142 and C171/C183. The Fibronectin type-III 2 domain maps to 224–336 (KPDPPHIKHL…WSEAQSIGKE (113 aa)). An N-linked (GlcNAc...) asparagine glycan is attached at N262. The short motif at 324–328 (WSDWS) is the WSXWS motif element. N338 is a glycosylation site (N-linked (GlcNAc...) asparagine). Residues 341-364 (FYTTMLLTIPVFVAVAVIILLFYL) form a helical membrane-spanning segment. At 365–424 (KRLKIIIFPPIPDPGKIFKEMFGDQNDDTLHWKKYDIYEKQSKEETDSVVLIENLKKAAP) the chain is on the cytoplasmic side. Residues 371-379 (IFPPIPDPG) carry the Box 1 motif motif.

This sequence belongs to the type I cytokine receptor family. Type 5 subfamily. Interleukin-13 receptor is a complex of IL4R, IL13RA1, and possibly other components. Interacts with TRAF3IP1. Interacts with IL4. As to expression, spleen, liver, thymus, heart, lung, kidney, testis, stomach, brain, skin, and colon; but not skeletal muscle.

The protein resides in the membrane. Its function is as follows. Binds with low affinity to interleukin-13 (IL13). Together with IL4RA can form a functional receptor for IL13. Also serves as an alternate accessory protein to the common cytokine receptor gamma chain for interleukin-4 (IL4) signaling, but cannot replace the function of IL2RG in allowing enhanced interleukin-2 (IL2) binding activity. This is Interleukin-13 receptor subunit alpha-1 (Il13ra1) from Mus musculus (Mouse).